Consider the following 85-residue polypeptide: Alpha-conotoxin Lt28.1 (85 aa).

The first 21 residues, 1-21 (MPKLEMMLLVLLILPLCYIDA), serve as a signal peptide directing secretion. A propeptide spanning residues 22 to 40 (VGPPPPWNMEDEIIEHWQK) is cleaved from the precursor. Disulfide bonds link cysteine 61-cysteine 74, cysteine 66-cysteine 84, cysteine 67-cysteine 79, and cysteine 72-cysteine 81.

This sequence belongs to the conotoxin D superfamily. In terms of tissue distribution, expressed by the venom duct.

The protein localises to the secreted. Alpha-conotoxins act on postsynaptic membranes, they bind to the nicotinic acetylcholine receptors (nAChR) and thus inhibit them. This toxin weakly inhibits alpha-9-alpha-10/CHRNA9-CHRNA10 nAChRs (IC(50)=3 uM). The protein is Alpha-conotoxin Lt28.1 of Conus litteratus (Lettered cone).